The primary structure comprises 971 residues: Exportin-2 (971 aa).

One can recognise an Importin N-terminal domain in the interval 29 to 102 (AEKFLESVEG…KANIVNLMLT (74 aa)).

This sequence belongs to the XPO2/CSE1 family. In terms of assembly, interacts with cftr. As to expression, detected in larval gut, liver, exocrine pancreas and part of the brain and retina at 96 hpf.

It is found in the cytoplasm. The protein resides in the nucleus. It localises to the apical cell membrane. Its subcellular location is the basal cell membrane. The protein localises to the lateral cell membrane. In terms of biological role, export receptor for importin alpha. Mediates importin-alpha re-export from the nucleus to the cytoplasm after import substrates have been released into the nucleoplasm. Negatively regulates fluid secretion and plays a role in fluid homeostasis by down-regulating cftr activity. This chain is Exportin-2 (cse1l), found in Danio rerio (Zebrafish).